The sequence spans 364 residues: Ribosomal RNA large subunit methyltransferase F (364 aa).

The segment covering 1 to 17 (MPKPAIKTAAKPATSSA) has biased composition (low complexity). A disordered region spans residues 1–53 (MPKPAIKTAAKPATSSAGKRGKPITPKSVAKPQAAKPKTVSKPKVKPGEKKRL). Basic residues predominate over residues 39-53 (TVSKPKVKPGEKKRL).

This sequence belongs to the methyltransferase superfamily. METTL16/RlmF family.

The protein resides in the cytoplasm. The catalysed reaction is adenosine(1618) in 23S rRNA + S-adenosyl-L-methionine = N(6)-methyladenosine(1618) in 23S rRNA + S-adenosyl-L-homocysteine + H(+). In terms of biological role, specifically methylates the adenine in position 1618 of 23S rRNA. The protein is Ribosomal RNA large subunit methyltransferase F of Shewanella sp. (strain MR-4).